Reading from the N-terminus, the 1271-residue chain is Clustered mitochondria protein homolog (1271 aa).

TPR repeat units lie at residues 104-138 (RHKP…ELGE) and 502-535 (CYGL…KPHK). The 252-residue stretch at 329 to 580 (DQSRPQLSIL…RSTPLDIDFI (252 aa)) folds into the Clu domain. Residues 729–763 (QEEKSKIEDNEKAIEEEKKEEKTEKKEEKEEKADE) show a composition bias toward basic and acidic residues. A disordered region spans residues 729–783 (QEEKSKIEDNEKAIEEEKKEEKTEKKEEKEEKADEEKSENEEDKTKPEEPSKGVF). TPR repeat units follow at residues 1067–1100 (ISSY…WDFV), 1109–1142 (VTTL…SEKI), and 1151–1184 (AMIH…FSRH). The interval 1212–1271 (QAKDKNKPKKVKAPPVPPQATTKKSKNKSKMAQTQISKLHLNSSTRFSSSSRVKPRLKKK) is disordered. Residues 1241 to 1253 (KMAQTQISKLHLN) show a composition bias toward polar residues. Residues 1254 to 1263 (SSTRFSSSSR) show a composition bias toward low complexity.

It belongs to the CLU family. As to quaternary structure, may associate with the eukaryotic translation initiation factor 3 (eIF-3) complex.

The protein localises to the cytoplasm. MRNA-binding protein involved in proper cytoplasmic distribution of mitochondria. This is Clustered mitochondria protein homolog from Meyerozyma guilliermondii (strain ATCC 6260 / CBS 566 / DSM 6381 / JCM 1539 / NBRC 10279 / NRRL Y-324) (Yeast).